A 245-amino-acid polypeptide reads, in one-letter code: tRNA pseudouridine synthase A (245 aa).

The active-site Nucleophile is the Asp52. Substrate is bound at residue Tyr111.

This sequence belongs to the tRNA pseudouridine synthase TruA family. As to quaternary structure, homodimer.

It carries out the reaction uridine(38/39/40) in tRNA = pseudouridine(38/39/40) in tRNA. Formation of pseudouridine at positions 38, 39 and 40 in the anticodon stem and loop of transfer RNAs. This Rickettsia bellii (strain RML369-C) protein is tRNA pseudouridine synthase A.